We begin with the raw amino-acid sequence, 429 residues long: Enolase (429 aa).

(2R)-2-phosphoglycerate is bound at residue glutamine 163. Residue glutamate 205 is the Proton donor of the active site. The Mg(2+) site is built by aspartate 242, glutamate 285, and aspartate 312. Residues lysine 337, arginine 366, serine 367, and lysine 388 each contribute to the (2R)-2-phosphoglycerate site. Lysine 337 acts as the Proton acceptor in catalysis.

This sequence belongs to the enolase family. Mg(2+) is required as a cofactor.

The protein resides in the cytoplasm. It is found in the secreted. The protein localises to the cell surface. The catalysed reaction is (2R)-2-phosphoglycerate = phosphoenolpyruvate + H2O. The protein operates within carbohydrate degradation; glycolysis; pyruvate from D-glyceraldehyde 3-phosphate: step 4/5. Its function is as follows. Catalyzes the reversible conversion of 2-phosphoglycerate (2-PG) into phosphoenolpyruvate (PEP). It is essential for the degradation of carbohydrates via glycolysis. The polypeptide is Enolase (Aromatoleum aromaticum (strain DSM 19018 / LMG 30748 / EbN1) (Azoarcus sp. (strain EbN1))).